Consider the following 30-residue polypeptide: Agglutinin alpha-1 chain (30 aa).

The region spanning 1 to 30 (GVAFDDGSYTGIREINFEYNRETAIGGXQV) is the Jacalin-type lectin domain.

The protein belongs to the jacalin lectin family. In terms of assembly, tetramer of four alpha chains associated with two or four beta chains.

Functionally, N-acetyl-galactosamine and D-galactose specific lectin. Binds the Tn-antigen structure GalNAc-alpha-1-O-Ser, the T-antigen structure Gal-beta1-3-GalNAc and IgA. In Morus nigra (Black mulberry), this protein is Agglutinin alpha-1 chain.